Here is a 214-residue protein sequence, read N- to C-terminus: Ribonuclease HII (214 aa).

The 189-residue stretch at 26-214 (EIVCGVDEAG…PVRAALDLIR (189 aa)) folds into the RNase H type-2 domain. A divalent metal cation contacts are provided by aspartate 32, glutamate 33, and aspartate 124.

Belongs to the RNase HII family. The cofactor is Mn(2+). Mg(2+) serves as cofactor.

It localises to the cytoplasm. The catalysed reaction is Endonucleolytic cleavage to 5'-phosphomonoester.. Functionally, endonuclease that specifically degrades the RNA of RNA-DNA hybrids. The sequence is that of Ribonuclease HII from Burkholderia lata (strain ATCC 17760 / DSM 23089 / LMG 22485 / NCIMB 9086 / R18194 / 383).